The chain runs to 273 residues: MSDIHSLLVAAILGVVEGLTEFLPVSSTGHMIIVGHLLGFEGDTANTFEVVIQLGSILAVVVMFWRRLFGLIGIHFGKPPAHEGQGSGRLSLIHILLGMIPAVVMGLIFHDTIKSLFNPVNVMYALIVGGVLLIAAEVLKPKQPRAVGIDDMTYRQAFVIGCFQCLALWPGFSRSGATISGGMLMGVSRYAASEFSFLLAVPMMMGATVLDVYKSIGFLNMGDVPMFAVGFVMAFIVALIAIKTFLQLIKRISFIPFAIYRFIVAAAVYVVFF.

8 helical membrane passes run 13-35 (LGVV…IIVG), 45-65 (ANTF…VMFW), 90-110 (LSLI…LIFH), 116-136 (LFNP…LIAA), 157-177 (AFVI…RSGA), 190-210 (YAAS…ATVL), 222-242 (GDVP…LIAI), and 252-272 (ISFI…YVVF).

Belongs to the UppP family.

The protein resides in the cell inner membrane. It carries out the reaction di-trans,octa-cis-undecaprenyl diphosphate + H2O = di-trans,octa-cis-undecaprenyl phosphate + phosphate + H(+). Its function is as follows. Catalyzes the dephosphorylation of undecaprenyl diphosphate (UPP). Confers resistance to bacitracin. This is Undecaprenyl-diphosphatase from Klebsiella pneumoniae subsp. pneumoniae (strain ATCC 700721 / MGH 78578).